The sequence spans 134 residues: MGKDTIADIITSIRNADMEKKGTVRIASTNINISENIVQILLREGFIENVRKHRENNKYFLVSTLRHRRNRKGAYRNILKRISRPGLRIYSNYQRIPRILGGMGIVILSTSRGIMTDREARLEGIGGEILCYIW.

The protein belongs to the universal ribosomal protein uS8 family. In terms of assembly, part of the 30S ribosomal subunit.

The protein resides in the plastid. Its subcellular location is the chloroplast. Functionally, one of the primary rRNA binding proteins, it binds directly to 16S rRNA central domain where it helps coordinate assembly of the platform of the 30S subunit. The sequence is that of Small ribosomal subunit protein uS8c (rps8) from Chloranthus spicatus (Chulantree).